The primary structure comprises 349 residues: Ureidoglycolate dehydrogenase (NAD(+)) (349 aa).

His116 functions as the Proton acceptor in the catalytic mechanism. NAD(+) contacts are provided by residues Ser140, 174 to 176, Lys224, and 306 to 308; these read DMA and GQD.

It belongs to the LDH2/MDH2 oxidoreductase family. As to quaternary structure, homodimer.

The protein localises to the cytoplasm. It catalyses the reaction (S)-ureidoglycolate + NAD(+) = N-carbamoyl-2-oxoglycine + NADH + H(+). Its pathway is nitrogen metabolism; (S)-allantoin degradation; oxalurate from (S)-ureidoglycolate: step 1/1. In terms of biological role, allD plays a pivotal role as a metabolic branch-point enzyme in nitrogen utilization via the assimilation of allantoin. It is able to utilize allantoin as a sole source of nitrogen under anaerobic conditions. Catalyzes the oxidation of ureidoglycolate to oxalurate. This Escherichia coli (strain K12) protein is Ureidoglycolate dehydrogenase (NAD(+)).